A 259-amino-acid chain; its full sequence is Deoxyribose-phosphate aldolase (259 aa).

Asp102 functions as the Proton donor/acceptor in the catalytic mechanism. Residue Lys167 is the Schiff-base intermediate with acetaldehyde of the active site. The Proton donor/acceptor role is filled by Lys201.

It belongs to the DeoC/FbaB aldolase family. DeoC type 2 subfamily.

It is found in the cytoplasm. The enzyme catalyses 2-deoxy-D-ribose 5-phosphate = D-glyceraldehyde 3-phosphate + acetaldehyde. The protein operates within carbohydrate degradation; 2-deoxy-D-ribose 1-phosphate degradation; D-glyceraldehyde 3-phosphate and acetaldehyde from 2-deoxy-alpha-D-ribose 1-phosphate: step 2/2. Its function is as follows. Catalyzes a reversible aldol reaction between acetaldehyde and D-glyceraldehyde 3-phosphate to generate 2-deoxy-D-ribose 5-phosphate. In Klebsiella pneumoniae (strain 342), this protein is Deoxyribose-phosphate aldolase.